A 559-amino-acid chain; its full sequence is Asparagine--tRNA ligase, cytoplasmic (559 aa).

Ser-72 bears the Phosphoserine mark. Residues 82–102 (HREQMKNDSREKKEAEDNLRR) form a disordered region. Lys-255 carries the post-translational modification N6-acetyllysine. Ser-493 bears the Phosphoserine mark. Position 501 is an N6-acetyllysine (Lys-501).

The protein belongs to the class-II aminoacyl-tRNA synthetase family. Homodimer.

It localises to the cytoplasm. The catalysed reaction is tRNA(Asn) + L-asparagine + ATP = L-asparaginyl-tRNA(Asn) + AMP + diphosphate + H(+). In terms of biological role, catalyzes the attachment of asparagine to tRNA(Asn) in a two-step reaction: asparagine is first activated by ATP to form Asn-AMP and then transferred to the acceptor end of tRNA(Asn). In addition to its essential role in protein synthesis, acts as a signaling molecule that induced migration of CCR3-expressing cells. Has an essential role in the development of the cerebral cortex, being required for proper proliferation of radial glial cells. The protein is Asparagine--tRNA ligase, cytoplasmic of Mus musculus (Mouse).